We begin with the raw amino-acid sequence, 243 residues long: Ribosomal RNA small subunit methyltransferase J (243 aa).

S-adenosyl-L-methionine contacts are provided by residues 112–113 and aspartate 164; that span reads ER.

This sequence belongs to the methyltransferase superfamily. RsmJ family.

The protein localises to the cytoplasm. It catalyses the reaction guanosine(1516) in 16S rRNA + S-adenosyl-L-methionine = N(2)-methylguanosine(1516) in 16S rRNA + S-adenosyl-L-homocysteine + H(+). Specifically methylates the guanosine in position 1516 of 16S rRNA. This Legionella pneumophila (strain Lens) protein is Ribosomal RNA small subunit methyltransferase J.